The sequence spans 190 residues: CD70 antigen (190 aa).

The Cytoplasmic segment spans residues 1–17 (MEEEGSGCNVPRLPWAS). A helical transmembrane segment spans residues 18–38 (ILRAALLLLLIGMVIYCFLCG). Residues 39–190 (QRFTQQQLDS…TFFGVQLVRP (152 aa)) lie on the Extracellular side of the membrane. The THD domain maps to 52-188 (DLAELLLNHT…DETFFGVQLV (137 aa)). Residues Asn-59 and Asn-110 are each glycosylated (N-linked (GlcNAc...) asparagine). 2 disulfide bridges follow: Cys-111–Cys-148 and Cys-130–Cys-165. Asn-167 is a glycosylation site (N-linked (GlcNAc...) asparagine).

Belongs to the tumor necrosis factor family. As to quaternary structure, homotrimer. N-glycosylated.

The protein resides in the cell membrane. Its function is as follows. Expressed at the plasma membrane of B cells, it is the ligand of the CD27 receptor which is specifically expressed at the surface of T cells. The CD70-CD27 signaling pathway mediates antigen-specific T cell activation and expansion which in turn provides immune surveillance of B cells. The chain is CD70 antigen from Sus scrofa (Pig).